The following is a 525-amino-acid chain: Acyl-lipid (9-3)-desaturase (525 aa).

The 75-residue stretch at 102–176 (KSTHPLSEVA…LQDFYIGDVE (75 aa)) folds into the Cytochrome b5 heme-binding domain. Heme-binding residues include histidine 137 and histidine 159. Residues 216–236 (VAIFAASIAIICWSKTISAVL) form a helical membrane-spanning segment. The short motif at 254-258 (HDFLH) is the Histidine box-1 element. Residues 266–286 (WLNEVVGYVIGNAVLGFSTGW) form a helical membrane-spanning segment. The Histidine box-2 signature appears at 291–295 (HNLHH). A run of 3 helical transmembrane segments spans residues 340-360 (QHLF…FWSW), 378-398 (GTVL…LPGW), and 401-421 (LVWM…VFVL). A Histidine box-3 motif is present at residues 462–466 (QIEHH).

This sequence belongs to the fatty acid desaturase type 1 family.

The protein localises to the membrane. It carries out the reaction (9Z,12Z,15Z)-octadecatrienoyl-containing glycerolipid + 2 Fe(II)-[cytochrome b5] + O2 + 2 H(+) = (6Z,9Z,12Z,15Z)-octadecatetraenoyl-containing glycerolipid + 2 Fe(III)-[cytochrome b5] + 2 H2O. It catalyses the reaction a (9Z,12Z)-octadecadienoyl-containing glycerolipid + 2 Fe(II)-[cytochrome b5] + O2 + 2 H(+) = (6Z,9Z,12Z)-octadecatrienoyl-containing glycerolipid + 2 Fe(III)-[cytochrome b5] + 2 H2O. It functions in the pathway lipid metabolism; polyunsaturated fatty acid biosynthesis. Functionally, fatty acid desaturase able to introduce a delta(6)-double bond into delta(9)-unsaturated fatty-acid substrates. Can use both linoleic acid (18:2(9Z,12Z)) and alpha-linolenic acid (18:3(9Z,12Z,15Z)) as substrates. Required for the biosynthesis of arachidonic acid (20:4(5z,8Z,11Z,14Z)). The chain is Acyl-lipid (9-3)-desaturase from Physcomitrium patens (Spreading-leaved earth moss).